A 400-amino-acid polypeptide reads, in one-letter code: Argininosuccinate synthase (400 aa).

An ATP-binding site is contributed by 9–17; that stretch reads AYSGGLDTS. L-citrulline is bound at residue Tyr87. Residue Gly117 participates in ATP binding. L-aspartate is bound by residues Thr119, Asn123, and Asp124. Asn123 is an L-citrulline binding site. Positions 127, 176, 185, 261, and 273 each coordinate L-citrulline.

This sequence belongs to the argininosuccinate synthase family. Type 1 subfamily. As to quaternary structure, homotetramer.

Its subcellular location is the cytoplasm. The enzyme catalyses L-citrulline + L-aspartate + ATP = 2-(N(omega)-L-arginino)succinate + AMP + diphosphate + H(+). Its pathway is amino-acid biosynthesis; L-arginine biosynthesis; L-arginine from L-ornithine and carbamoyl phosphate: step 2/3. The sequence is that of Argininosuccinate synthase from Chlorobium limicola (strain DSM 245 / NBRC 103803 / 6330).